A 338-amino-acid polypeptide reads, in one-letter code: Glycerol-3-phosphate dehydrogenase [NAD(P)+] (338 aa).

The NADPH site is built by Trp-12, His-33, and Lys-110. Residues Lys-110, Gly-142, and Ser-144 each coordinate sn-glycerol 3-phosphate. Residue Ala-146 coordinates NADPH. Residues Lys-197, Asp-250, Ser-260, Arg-261, and Asn-262 each coordinate sn-glycerol 3-phosphate. The Proton acceptor role is filled by Lys-197. Arg-261 contributes to the NADPH binding site. NADPH-binding residues include Val-286 and Glu-288.

Belongs to the NAD-dependent glycerol-3-phosphate dehydrogenase family.

It localises to the cytoplasm. The catalysed reaction is sn-glycerol 3-phosphate + NAD(+) = dihydroxyacetone phosphate + NADH + H(+). The enzyme catalyses sn-glycerol 3-phosphate + NADP(+) = dihydroxyacetone phosphate + NADPH + H(+). The protein operates within membrane lipid metabolism; glycerophospholipid metabolism. Functionally, catalyzes the reduction of the glycolytic intermediate dihydroxyacetone phosphate (DHAP) to sn-glycerol 3-phosphate (G3P), the key precursor for phospholipid synthesis. The sequence is that of Glycerol-3-phosphate dehydrogenase [NAD(P)+] from Acidobacterium capsulatum (strain ATCC 51196 / DSM 11244 / BCRC 80197 / JCM 7670 / NBRC 15755 / NCIMB 13165 / 161).